We begin with the raw amino-acid sequence, 319 residues long: Taste receptor type 2 member 14 (319 aa).

Topologically, residues 1–7 (MDGVIKS) are extracellular. Residues 8–28 (IFTFILILEFIIGNLGNSFIV) traverse the membrane as a helical segment. Over 29–55 (LVNCIDWVKRRKISLVDQLLIALAISR) the chain is Cytoplasmic. Residues 56–76 (ISLVWSIFGSWCVSVVFPALF) traverse the membrane as a helical segment. Over 77-87 (ATEKLLRMLTN) the chain is Extracellular. Positions 86 and 89 each coordinate cholesterol. A helical transmembrane segment spans residues 88–108 (IWTVTNHFSVWLATILGTFYF). At 109 to 129 (LKIANFSNSIFLYLKWRVKKV) the chain is on the cytoplasmic side. The helical transmembrane segment at 130-150 (VLVLLLVTLVLLFLNILLINI) threads the bilayer. Residues 151–184 (HINASINGYRGNMTCSSASCNFIRFSSAIALTST) lie on the Extracellular side of the membrane. Residues N153 and N162 are each glycosylated (N-linked (GlcNAc...) asparagine). A180 contributes to the cholesterol binding site. A helical membrane pass occupies residues 185 to 205 (VFILIPFTLSLATFLLLSFSL). The Cytoplasmic portion of the chain corresponds to 206 to 232 (WKHRKKMQHTVKGYRDVSTKAHRGVMQ). A helical membrane pass occupies residues 233-253 (TVITFLLLYAVFFLTFFVSIW). The Extracellular portion of the chain corresponds to 254 to 261 (ISERLKEN). The helical transmembrane segment at 262 to 282 (QIIILSEMMGLAYPSGHSCVL) threads the bilayer. 2 residues coordinate cholesterol: I265 and E268. Topologically, residues 283–317 (ILGNKKLRQASLSVLWWLRYRFKDGELSGHKEFRE) are cytoplasmic.

It belongs to the G-protein coupled receptor T2R family. As to quaternary structure, core component of the TAS2R14-GNAI1 complex, consisting of TAS2R14, GNAI1, GNB1 and GNG2; within the complex interacts with GNAI1. Core component of the TAS2R14-GNAT3 complex, consisting of TAS2R14, GNAT3, GNB1 and GNG2; within the complex interacts with GNAT3. Core component of the TAS2R14-GNAS2 complex, consisting of TAS2R14, GNAS2, GNB1 and GNG2; within the complex interacts with GNAS2.

The protein localises to the membrane. It carries out the reaction Ca(2+)(in) = Ca(2+)(out). The enzyme catalyses 3',5'-cyclic AMP(in) = 3',5'-cyclic AMP(out). Its activity is regulated as follows. Basal activity is enhanced by binding to bitter tastants, such as flufenamic acid and aristolochic acid. Regulated by cholesterol in a concentration-dependent manner. In terms of biological role, gustducin-linked G-protein coupled receptor that plays a role in the perception of bitterness. The activity of this receptor stimulates GNAT3, activating the gustducin G-protein pathway. Likely plays a role in sensing the chemical composition of the gastrointestinal content and other extra-oral tissues via the inhibitory G-protein pathways. The chain is Taste receptor type 2 member 14 (TAS2R14) from Papio hamadryas (Hamadryas baboon).